The following is a 330-amino-acid chain: Membrane-associated protein VIPP1, chloroplastic (330 aa).

The N-terminal 64 residues, 1 to 64 (MALKASPVTG…LRLACDNRLR (64 aa)), are a transit peptide targeting the chloroplast. Coiled-coil stretches lie at residues 124–259 (SQKQ…LTQI) and 312–329 (KDSEIENELNELRRKAND). The disordered stretch occupies residues 287 to 312 (LSGSSKKGELPPGRSTVAASTRYPFK).

The protein belongs to the PspA/Vipp/IM30 family. In terms of assembly, homomultimer. Complex formation involves interaction via the central alpha-helical domain (71-286).

The protein localises to the plastid. The protein resides in the chloroplast inner membrane. It is found in the chloroplast thylakoid membrane. Its function is as follows. Required for plastid vesicle formation and thylakoid membrane biogenesis, but not for functional assembly of thylakoid protein complexes. The protein is Membrane-associated protein VIPP1, chloroplastic of Arabidopsis thaliana (Mouse-ear cress).